A 351-amino-acid polypeptide reads, in one-letter code: Ribonucleoside-diphosphate reductase subunit beta (351 aa).

Residues Asp94, Glu124, and His127 each contribute to the Fe cation site. Tyr131 is an active-site residue. Residues Glu191, Glu225, and His228 each coordinate Fe cation.

The protein belongs to the ribonucleoside diphosphate reductase small chain family. In terms of assembly, tetramer of two alpha and two beta subunits. The cofactor is Fe cation.

The enzyme catalyses a 2'-deoxyribonucleoside 5'-diphosphate + [thioredoxin]-disulfide + H2O = a ribonucleoside 5'-diphosphate + [thioredoxin]-dithiol. Its function is as follows. Provides the precursors necessary for DNA synthesis. Catalyzes the biosynthesis of deoxyribonucleotides from the corresponding ribonucleotides. The protein is Ribonucleoside-diphosphate reductase subunit beta (nrdB) of Treponema pallidum (strain Nichols).